We begin with the raw amino-acid sequence, 78 residues long: MSRVCQVTGKRPVTGNNRSHARNATKRRFLPNLQTHRFWVESEKRFVKLRLTAKGMRIIDKKGIDTVLADIRARGENV.

Positions 1–20 are disordered; that stretch reads MSRVCQVTGKRPVTGNNRSH.

It belongs to the bacterial ribosomal protein bL28 family.

The chain is Large ribosomal subunit protein bL28 from Vibrio parahaemolyticus serotype O3:K6 (strain RIMD 2210633).